A 411-amino-acid polypeptide reads, in one-letter code: S-adenosylmethionine synthase (411 aa).

ATP is bound at residue His15. Asp17 serves as a coordination point for Mg(2+). Glu43 provides a ligand contact to K(+). Residues Glu56 and Gln100 each contribute to the L-methionine site. The tract at residues 100–110 is flexible loop; sequence QSPDIAQGVNE. Residues 171–173, 248–249, Asp257, 263–264, Ala280, and Lys284 contribute to the ATP site; these read DGK, KF, and RK. Position 257 (Asp257) interacts with L-methionine. Residue Lys288 coordinates L-methionine.

This sequence belongs to the AdoMet synthase family. Homotetramer; dimer of dimers. The cofactor is Mg(2+). Requires K(+) as cofactor.

The protein resides in the cytoplasm. The enzyme catalyses L-methionine + ATP + H2O = S-adenosyl-L-methionine + phosphate + diphosphate. The protein operates within amino-acid biosynthesis; S-adenosyl-L-methionine biosynthesis; S-adenosyl-L-methionine from L-methionine: step 1/1. Its function is as follows. Catalyzes the formation of S-adenosylmethionine (AdoMet) from methionine and ATP. The overall synthetic reaction is composed of two sequential steps, AdoMet formation and the subsequent tripolyphosphate hydrolysis which occurs prior to release of AdoMet from the enzyme. This is S-adenosylmethionine synthase from Synechococcus sp. (strain CC9605).